Here is a 498-residue protein sequence, read N- to C-terminus: Pyridine nucleotide-disulfide oxidoreductase domain-containing protein 1 (498 aa).

Methionine 1 bears the N-acetylmethionine mark.

The protein belongs to the class-I pyridine nucleotide-disulfide oxidoreductase family. PYROXD1 subfamily. FAD serves as cofactor.

The protein resides in the nucleus. It localises to the cytoplasm. The protein localises to the myofibril. Its subcellular location is the sarcomere. Functionally, probable FAD-dependent oxidoreductase; involved in the cellular oxidative stress response. Required for normal sarcomere structure and muscle fiber integrity. The sequence is that of Pyridine nucleotide-disulfide oxidoreductase domain-containing protein 1 (Pyroxd1) from Mus musculus (Mouse).